A 75-amino-acid chain; its full sequence is Small ribosomal subunit protein bS21 (75 aa).

Residues 52 to 75 (RRARKLARKRAQREGLIGGRPGAR) are disordered. Over residues 53–62 (RARKLARKRA) the composition is skewed to basic residues.

The protein belongs to the bacterial ribosomal protein bS21 family.

The polypeptide is Small ribosomal subunit protein bS21 (Brucella anthropi (strain ATCC 49188 / DSM 6882 / CCUG 24695 / JCM 21032 / LMG 3331 / NBRC 15819 / NCTC 12168 / Alc 37) (Ochrobactrum anthropi)).